The chain runs to 55 residues: Glycine-rich antimicrobial peptide Pg-AMP (55 aa).

The span at 18 to 39 shows a compositional bias: gly residues; sequence GYGGYGGGRYGGGYGSGRGQPV. Positions 18–55 are disordered; sequence GYGGYGGGRYGGGYGSGRGQPVGQGVERSHDDNRNQPR. The segment covering 44-55 has biased composition (basic and acidic residues); it reads ERSHDDNRNQPR.

In terms of assembly, monomer and homodimer. Might act by homodimer formation.

Its function is as follows. Has antibacterial activity against the Gram-negative bacteria Klebsiella sp., Proteus sp., E.coli ATCC 8739 (MIC=72 ug/ml) and K.pneumoniae (MIC=32 ug/ml). Has no activity against the Gram-negative bacterium S.typhimurium or the Gram-positive bacterium S.aureus. Does not have antifungal activity against the human and plant pathogenic fungi F.oxysporum, A.fumigatus and R.solani. The sequence is that of Glycine-rich antimicrobial peptide Pg-AMP from Psidium guajava (Guava).